A 304-amino-acid polypeptide reads, in one-letter code: Zinc carboxypeptidase (304 aa).

A Peptidase M14 domain is found at 1–294; it reads QYHTLPEIYS…DSVVTILKES (294 aa). The Zn(2+) site is built by H58 and E61. C125 and C148 are disulfide-bonded. Zn(2+) is bound at residue H184. E259 acts as the Proton donor/acceptor in catalysis.

This sequence belongs to the peptidase M14 family. Zn(2+) is required as a cofactor. Gut specific.

Its subcellular location is the secreted. Involved in the digestion of the blood meal. In Simulium vittatum (Striped black fly), this protein is Zinc carboxypeptidase.